A 313-amino-acid polypeptide reads, in one-letter code: Glutathionyl-hydroquinone reductase PcpF (313 aa).

Residue C53 is the Nucleophile of the active site. Residues W86, R119–I122, and E137–S138 contribute to the glutathione site. Residues P161 to Y285 form the GST C-terminal domain. Y184 functions as the Proton donor/acceptor in the catalytic mechanism.

This sequence belongs to the GST superfamily. Xi-class GSH transferase family. As to quaternary structure, homodimer.

The enzyme catalyses 2-(glutathione-S-yl)-hydroquinone + glutathione = hydroquinone + glutathione disulfide. Catalyzes glutathione (GSH)-dependent reduction of glutathionyl-hydroquinones (GS-HQs) to the corresponding hydroquinones. Can act on halogenated substrates such as GS-2,6-dichloro-p-hydroquinone (GS-DiCH) and GS-trichloro-p-hydroquinone (GS-TriCH). Involved in the degradation of pentachlorophenol (PCP), a toxic pollutant. The protein is Glutathionyl-hydroquinone reductase PcpF of Sphingobium chlorophenolicum.